A 161-amino-acid chain; its full sequence is Putative HTH-type transcriptional regulator MT1325 (161 aa).

Residues 2-132 (RMSAKAEYAV…EETTLADVAG (131 aa)) enclose the HTH rrf2-type domain.

The sequence is that of Putative HTH-type transcriptional regulator MT1325 from Mycobacterium tuberculosis (strain CDC 1551 / Oshkosh).